The following is a 155-amino-acid chain: Ribosomal RNA large subunit methyltransferase H (155 aa).

Residues L73, G104, and 123-128 (LSPLTL) contribute to the S-adenosyl-L-methionine site.

Belongs to the RNA methyltransferase RlmH family. Homodimer.

The protein resides in the cytoplasm. The catalysed reaction is pseudouridine(1915) in 23S rRNA + S-adenosyl-L-methionine = N(3)-methylpseudouridine(1915) in 23S rRNA + S-adenosyl-L-homocysteine + H(+). Specifically methylates the pseudouridine at position 1915 (m3Psi1915) in 23S rRNA. This chain is Ribosomal RNA large subunit methyltransferase H, found in Stutzerimonas stutzeri (strain A1501) (Pseudomonas stutzeri).